Consider the following 209-residue polypeptide: Large ribosomal subunit protein uL3 (209 aa).

The interval 119–145 (AIKRHGQSRGPMSHGSHFHRAPGSVGM) is disordered.

The protein belongs to the universal ribosomal protein uL3 family. In terms of assembly, part of the 50S ribosomal subunit. Forms a cluster with proteins L14 and L19.

One of the primary rRNA binding proteins, it binds directly near the 3'-end of the 23S rRNA, where it nucleates assembly of the 50S subunit. The chain is Large ribosomal subunit protein uL3 from Staphylococcus aureus (strain COL).